The sequence spans 330 residues: Ferredoxin--NADP reductase (330 aa).

E35, Q43, Y48, V90, F123, D285, and T326 together coordinate FAD.

It belongs to the ferredoxin--NADP reductase type 2 family. Homodimer. The cofactor is FAD.

The catalysed reaction is 2 reduced [2Fe-2S]-[ferredoxin] + NADP(+) + H(+) = 2 oxidized [2Fe-2S]-[ferredoxin] + NADPH. This chain is Ferredoxin--NADP reductase, found in Streptococcus equi subsp. zooepidemicus (strain MGCS10565).